Reading from the N-terminus, the 133-residue chain is MIIGIGSDLCDIRRIEKTLERFGDRFTHKSFTEIERRRSERKPDRASSYAKRFAAKEACSKALGTGLKGGVHLSGMGVVNLPSGKPTMALTGGAAERLASMVPEGMTPVIHLSLTDDHPYAQAFVIIEAVAAT.

Mg(2+)-binding residues include Asp8 and Glu57.

It belongs to the P-Pant transferase superfamily. AcpS family. The cofactor is Mg(2+).

It is found in the cytoplasm. It catalyses the reaction apo-[ACP] + CoA = holo-[ACP] + adenosine 3',5'-bisphosphate + H(+). In terms of biological role, transfers the 4'-phosphopantetheine moiety from coenzyme A to a Ser of acyl-carrier-protein. The polypeptide is Holo-[acyl-carrier-protein] synthase (Caulobacter sp. (strain K31)).